A 451-amino-acid chain; its full sequence is Alpha-galactosidase (451 aa).

P5–N71 provides a ligand contact to NAD(+). A substrate-binding site is contributed by N151. C173 contacts Mn(2+). H174 acts as the Proton donor in catalysis. A Mn(2+)-binding site is contributed by H203. R287 is a binding site for substrate.

Belongs to the glycosyl hydrolase 4 family. Homodimer. Mn(2+) serves as cofactor. The cofactor is NAD(+).

It carries out the reaction Hydrolysis of terminal, non-reducing alpha-D-galactose residues in alpha-D-galactosides, including galactose oligosaccharides, galactomannans and galactolipids.. The protein is Alpha-galactosidase (melA) of Salmonella typhimurium (strain LT2 / SGSC1412 / ATCC 700720).